The following is a 191-amino-acid chain: Calcium and integrin-binding protein 1 (191 aa).

Residue Gly-2 is the site of N-myristoyl glycine attachment. 2 EF-hand domains span residues 103 to 138 (TPDI…LTGE) and 148 to 183 (EMKQ…SPDF). 10 residues coordinate Ca(2+): Asp-116, Asp-118, Asp-120, Thr-122, Asp-127, Asp-161, Asp-163, Asp-165, Thr-167, and Glu-172.

As to quaternary structure, monomer. Interacts with the heterodimeric integrin alpha-IIb/beta3 (ITGA2B-ITGB3). Interacts with ITGA2B (via cytoplasmic domain); the interaction is direct and calcium-dependent. Interacts with the protein kinases PLK2/SNK and PRKDC (via the region immediately upstream of the kinase domain). Interacts with PLK3; the interaction inhibits PLK3 kinase activity. Interacts with PSEN2. Interacts (via C-terminus) with F8. Interacts with NBR1 (via C-terminus). Interacts with FEZ1 (via C-terminus). Interacts with UBR5 (via C-terminus); the interaction is sensitive to DNA damage, and may target CIB1 for ubiquitin-mediated degradation. Interacts with IFI6; the interaction is direct. Interacts with BCL2. Interacts with ITPR3; the interaction occurs in a calcium dependent manner. Interacts with PTK2/FAK1. Interacts with MAP3K5; the interaction inhibits MAP3K5 activation by phosphorylation, and its subsequent interaction with TRAF2. Interacts (via C-terminal region) with STMN2 (via the N-terminal region); the interaction is direct, occurs in a calcium-dependent manner and attenuates the STMN2-induced neurite outgrowth inhibition. Interacts with SPHK1, the interaction occurs in a calcium-dependent manner. Interacts with ITGA2B (via C-terminal cytoplasmic tail); the interaction occurs upon platelet aggregation and is stabilized/increased in a calcium and magnesium-dependent manner. Interacts with PAK1 (via N-terminal region); the interaction is direct and occurs in a calcium-dependent manner. Interacts with RAC3 (via C-terminal region); the interaction induces their association with the cytoskeleton upon alpha-IIb/beta3 integrin-mediated adhesion. Interacts with ITGA5 and ITGAV. Interacts with MYO1C. Interacts with ITGA2B (via C-terminal cytoplasmic tail region). Interacts (via C-terminal region) with PPP3R1; the interaction increases upon cardiomyocytes hypertrophy. Interacts with CACNA1C; the interaction increases upon cardiomyocytes hypertrophy. Interacts with TAS1R2 (via C-terminus); this interaction is independent of the myristoylation state of CIB1. Interacts and forms a complex with TMC6 and TMC8; the interaction stabilizes each component of the complex. As to expression, expressed in cardiomyocytes and neurons (at protein level). Expressed during early neural development.

The protein resides in the membrane. The protein localises to the cell membrane. It is found in the sarcolemma. It localises to the apical cell membrane. Its subcellular location is the cell projection. The protein resides in the ruffle membrane. The protein localises to the filopodium tip. It is found in the growth cone. It localises to the lamellipodium. Its subcellular location is the cytoplasm. The protein resides in the cytoskeleton. The protein localises to the microtubule organizing center. It is found in the centrosome. It localises to the perinuclear region. Its subcellular location is the nucleus. The protein resides in the neuron projection. The protein localises to the perikaryon. Functionally, calcium-binding protein that plays a role in the regulation of numerous cellular processes, such as cell differentiation, cell division, cell proliferation, cell migration, thrombosis, angiogenesis, cardiac hypertrophy and apoptosis. Involved in bone marrow megakaryocyte differentiation by negatively regulating thrombopoietin-mediated signaling pathway. Participates in the endomitotic cell cycle of megakaryocyte, a form of mitosis in which both karyokinesis and cytokinesis are interrupted. Plays a role in integrin signaling by negatively regulating alpha-IIb/beta3 activation in thrombin-stimulated megakaryocytes preventing platelet aggregation. Up-regulates PTK2/FAK1 activity, and is also needed for the recruitment of PTK2/FAK1 to focal adhesions; it thus appears to play an important role in focal adhesion formation. Positively regulates cell migration on fibronectin in a CDC42-dependent manner, the effect being negatively regulated by PAK1. Functions as a negative regulator of stress activated MAP kinase (MAPK) signaling pathways. Down-regulates inositol 1,4,5-trisphosphate receptor-dependent calcium signaling. Involved in sphingosine kinase SPHK1 translocation to the plasma membrane in a N-myristoylation-dependent manner preventing TNF-alpha-induced apoptosis. Regulates serine/threonine-protein kinase PLK3 activity for proper completion of cell division progression. Plays a role in microtubule (MT) dynamics during neuronal development; disrupts the MT depolymerization activity of STMN2 attenuating NGF-induced neurite outgrowth and the MT reorganization at the edge of lamellipodia. Promotes cardiomyocyte hypertrophy via activation of the calcineurin/NFAT signaling pathway. Stimulates calcineurin PPP3R1 activity by mediating its anchoring to the sarcolemma. In ischemia-induced (pathological or adaptive) angiogenesis, stimulates endothelial cell proliferation, migration and microvessel formation by activating the PAK1 and ERK1/ERK2 signaling pathway. Also promotes cancer cell survival and proliferation. May regulate cell cycle and differentiation of spermatogenic germ cells, and/or differentiation of supporting Sertoli cells. Forms a complex with TMC6/EVER1 and TMC8/EVER2 in lymphocytes and keratynocytes where CIB1 stabilizes TMC6 and TMC8 levels and reciprocally. This chain is Calcium and integrin-binding protein 1 (Cib1), found in Rattus norvegicus (Rat).